Here is a 417-residue protein sequence, read N- to C-terminus: UDP-N-acetylglucosamine 1-carboxyvinyltransferase (417 aa).

22–23 (KN) is a phosphoenolpyruvate binding site. Residue Arg-91 coordinates UDP-N-acetyl-alpha-D-glucosamine. The active-site Proton donor is Cys-115. Cys-115 is subject to 2-(S-cysteinyl)pyruvic acid O-phosphothioketal. Residues 120–124 (RPVDQ), Asp-304, and Ile-326 contribute to the UDP-N-acetyl-alpha-D-glucosamine site.

This sequence belongs to the EPSP synthase family. MurA subfamily.

It localises to the cytoplasm. It catalyses the reaction phosphoenolpyruvate + UDP-N-acetyl-alpha-D-glucosamine = UDP-N-acetyl-3-O-(1-carboxyvinyl)-alpha-D-glucosamine + phosphate. The protein operates within cell wall biogenesis; peptidoglycan biosynthesis. Functionally, cell wall formation. Adds enolpyruvyl to UDP-N-acetylglucosamine. The protein is UDP-N-acetylglucosamine 1-carboxyvinyltransferase of Desulfovibrio desulfuricans (strain ATCC 27774 / DSM 6949 / MB).